The primary structure comprises 117 residues: Immunoglobulin heavy variable 4-38-2 (117 aa).

A signal peptide spans 1–19 (MKHLWFFLLLVAAPRWVLS). Positions 20–44 (QVQLQESGPGLVKPSETLSLTCTVS) are framework-1. The Ig-like domain occupies 20–117 (QVQLQESGPG…ADTAVYYCAR (98 aa)). An intrachain disulfide couples Cys41 to Cys115. Positions 45-53 (GYSISSGYY) are complementarity-determining-1. The tract at residues 54–70 (WGWIRQPPGKGLEWIGS) is framework-2. A complementarity-determining-2 region spans residues 71-77 (IYHSGST). The tract at residues 78 to 115 (YYNPSLKSRVTISVDTSKNQFSLKLSSVTAADTAVYYC) is framework-3. Positions 116–117 (AR) are complementarity-determining-3.

As to quaternary structure, immunoglobulins are composed of two identical heavy chains and two identical light chains; disulfide-linked.

The protein localises to the secreted. Its subcellular location is the cell membrane. V region of the variable domain of immunoglobulin heavy chains that participates in the antigen recognition. Immunoglobulins, also known as antibodies, are membrane-bound or secreted glycoproteins produced by B lymphocytes. In the recognition phase of humoral immunity, the membrane-bound immunoglobulins serve as receptors which, upon binding of a specific antigen, trigger the clonal expansion and differentiation of B lymphocytes into immunoglobulins-secreting plasma cells. Secreted immunoglobulins mediate the effector phase of humoral immunity, which results in the elimination of bound antigens. The antigen binding site is formed by the variable domain of one heavy chain, together with that of its associated light chain. Thus, each immunoglobulin has two antigen binding sites with remarkable affinity for a particular antigen. The variable domains are assembled by a process called V-(D)-J rearrangement and can then be subjected to somatic hypermutations which, after exposure to antigen and selection, allow affinity maturation for a particular antigen. In Homo sapiens (Human), this protein is Immunoglobulin heavy variable 4-38-2.